The following is a 276-amino-acid chain: Diaminopimelate epimerase (276 aa).

Substrate-binding residues include N13, Q46, and N66. C75 serves as the catalytic Proton donor. Residues G76–N77, N159, N192, and E210–R211 contribute to the substrate site. C219 acts as the Proton acceptor in catalysis. G220–T221 contacts substrate.

This sequence belongs to the diaminopimelate epimerase family. Homodimer.

The protein localises to the cytoplasm. The enzyme catalyses (2S,6S)-2,6-diaminopimelate = meso-2,6-diaminopimelate. It participates in amino-acid biosynthesis; L-lysine biosynthesis via DAP pathway; DL-2,6-diaminopimelate from LL-2,6-diaminopimelate: step 1/1. Its function is as follows. Catalyzes the stereoinversion of LL-2,6-diaminopimelate (L,L-DAP) to meso-diaminopimelate (meso-DAP), a precursor of L-lysine and an essential component of the bacterial peptidoglycan. The chain is Diaminopimelate epimerase from Pseudomonas aeruginosa (strain LESB58).